The following is an 88-amino-acid chain: Small ribosomal subunit protein uS17 (88 aa).

Belongs to the universal ribosomal protein uS17 family. In terms of assembly, part of the 30S ribosomal subunit.

In terms of biological role, one of the primary rRNA binding proteins, it binds specifically to the 5'-end of 16S ribosomal RNA. In Mycoplasmopsis pulmonis (strain UAB CTIP) (Mycoplasma pulmonis), this protein is Small ribosomal subunit protein uS17.